We begin with the raw amino-acid sequence, 438 residues long: Dol-P-Man:Man(5)GlcNAc(2)-PP-Dol alpha-1,3-mannosyltransferase (438 aa).

Phosphoserine is present on S13. 11 helical membrane passes run 41–61 (YTLLVASCLCIAEVGITFWVI), 95–115 (TGPLVYPAGFLYIFTGLFYAT), 123–143 (MAQNIFAVLYLVTLVLVFLIY), 149–169 (VPPFVFFFMCCASYRVHSIFV), 172–192 (LFNDPVAMALLFLSINLFLAQ), 203–223 (LAVSVKMNVLLFAPGLLFLLL), 231–251 (ALPKLAICAALQVVLGLPFLL), 289–309 (FHLALLAAHLSLLLLFALCRW), 332–352 (ALTPNQIVSILFTSNFIGICF), 356–376 (LHYQFYVWYFHTLPYLLWAMP), and 407–427 (AALHLCHAVVLLQLWLSPESF).

The protein belongs to the glycosyltransferase ALG3 family.

It localises to the endoplasmic reticulum membrane. The enzyme catalyses an alpha-D-Man-(1-&gt;2)-alpha-D-Man-(1-&gt;2)-alpha-D-Man-(1-&gt;3)-[alpha-D-Man-(1-&gt;6)]-beta-D-Man-(1-&gt;4)-beta-D-GlcNAc-(1-&gt;4)-alpha-D-GlcNAc-diphospho-di-trans,poly-cis-dolichol + a di-trans,poly-cis-dolichyl beta-D-mannosyl phosphate = an alpha-D-Man-(1-&gt;2)-alpha-D-Man-(1-&gt;2)-alpha-D-Man-(1-&gt;3)-[alpha-D-Man-(1-&gt;3)-alpha-D-Man-(1-&gt;6)]-beta-D-Man-(1-&gt;4)-beta-D-GlcNAc-(1-&gt;4)-alpha-D-GlcNAc-diphospho-di-trans,poly-cis-dolichol + a di-trans,poly-cis-dolichyl phosphate + H(+). It participates in protein modification; protein glycosylation. Dol-P-Man:Man(5)GlcNAc(2)-PP-Dol alpha-1,3-mannosyltransferase that operates in the biosynthetic pathway of dolichol-linked oligosaccharides, the glycan precursors employed in protein asparagine (N)-glycosylation. The assembly of dolichol-linked oligosaccharides begins on the cytosolic side of the endoplasmic reticulum membrane and finishes in its lumen. The sequential addition of sugars to dolichol pyrophosphate produces dolichol-linked oligosaccharides containing fourteen sugars, including two GlcNAcs, nine mannoses and three glucoses. Once assembled, the oligosaccharide is transferred from the lipid to nascent proteins by oligosaccharyltransferases. In the lumen of the endoplasmic reticulum, adds the first dolichyl beta-D-mannosyl phosphate derived mannose in an alpha-1,3 linkage to Man(5)GlcNAc(2)-PP-dolichol to produce Man(6)GlcNAc(2)-PP-dolichol. Man(6)GlcNAc(2)-PP-dolichol is a substrate for ALG9, the following enzyme in the biosynthetic pathway. The chain is Dol-P-Man:Man(5)GlcNAc(2)-PP-Dol alpha-1,3-mannosyltransferase from Mus musculus (Mouse).